Here is a 217-residue protein sequence, read N- to C-terminus: GrpE protein homolog 1, mitochondrial (217 aa).

A mitochondrion-targeting transit peptide spans 1–27 (MAAQCVRLARRSLPALALSLRPSPRLL). Residues 29-56 (TATKQKNSGQNLEEDMGQSEQKADPPAT) are disordered. The segment covering 30-39 (ATKQKNSGQN) has biased composition (polar residues). Lys94 bears the N6-acetyllysine; alternate mark. The residue at position 94 (Lys94) is an N6-succinyllysine; alternate. Position 100 is an N6-acetyllysine (Lys100). Lys120 is subject to N6-succinyllysine. An N6-acetyllysine; alternate modification is found at Lys215. Residue Lys215 is modified to N6-succinyllysine; alternate.

This sequence belongs to the GrpE family. As to quaternary structure, probable component of the PAM complex at least composed of a mitochondrial HSP70 protein, GRPEL1 or GRPEL2, TIMM44, TIMM16/PAM16 and TIMM14/DNAJC19. Binds to HSP70, HSC70 and HSJ1B.

The protein localises to the mitochondrion matrix. Essential component of the PAM complex, a complex required for the translocation of transit peptide-containing proteins from the inner membrane into the mitochondrial matrix in an ATP-dependent manner. Seems to control the nucleotide-dependent binding of mitochondrial HSP70 to substrate proteins. The protein is GrpE protein homolog 1, mitochondrial (GRPEL1) of Homo sapiens (Human).